Reading from the N-terminus, the 458-residue chain is tRNA modification GTPase MnmE (458 aa).

The (6S)-5-formyl-5,6,7,8-tetrahydrofolate site is built by Arg23, Glu87, and Arg126. The TrmE-type G domain occupies 224 to 380 (GLSMVIVGKP…LKSKIKDLFF (157 aa)). Asn234 serves as a coordination point for K(+). GTP is bound by residues 234-239 (NVGKSS), 253-259 (TDIAGTT), and 278-281 (DTAG). Ser238 is a binding site for Mg(2+). Residues Thr253, Ile255, and Thr258 each coordinate K(+). Thr259 contacts Mg(2+). Lys458 provides a ligand contact to (6S)-5-formyl-5,6,7,8-tetrahydrofolate.

Belongs to the TRAFAC class TrmE-Era-EngA-EngB-Septin-like GTPase superfamily. TrmE GTPase family. In terms of assembly, homodimer. Heterotetramer of two MnmE and two MnmG subunits. K(+) is required as a cofactor.

The protein localises to the cytoplasm. Its function is as follows. Exhibits a very high intrinsic GTPase hydrolysis rate. Involved in the addition of a carboxymethylaminomethyl (cmnm) group at the wobble position (U34) of certain tRNAs, forming tRNA-cmnm(5)s(2)U34. In Clostridium perfringens (strain ATCC 13124 / DSM 756 / JCM 1290 / NCIMB 6125 / NCTC 8237 / Type A), this protein is tRNA modification GTPase MnmE.